Here is a 1518-residue protein sequence, read N- to C-terminus: Putative cellulose synthase 3 (1518 aa).

The catalytic stretch occupies residues 1 to 731 (MYGTWFTTGK…EEKLEKQSFV (731 aa)). A run of 3 helical transmembrane segments spans residues 24–44 (PVWV…SVRI), 71–91 (ITVF…VWRL), and 105–125 (LAVL…LSYF). The interval 144–237 (QWPSVDVFVP…FAVIFDCDHV (94 aa)) is catalytic subdomain A. Active-site residues include Asp186 and Asp330. A catalytic subdomain B region spans residues 314 to 374 (EAVMGIGGFA…GQRVRWARGM (61 aa)). 5 helical membrane passes run 404–424 (FLFA…LFLG), 428–448 (IAAS…HSVI), 465–485 (IYET…LLQP), 514–534 (ILAG…VWQF), and 543–563 (FILN…SIAV). The region spanning 569 to 668 (QTRNAPRVSV…ERQVVSMVFG (100 aa)) is the PilZ domain. Positions 732–1518 (LKPVPRSARH…IARDDLTGEL (787 aa)) are cyclic di-GMP binding domain. The interval 765 to 785 (APSPDQSGVTAETPFGDSNTG) is disordered. The span at 768-785 (PDQSGVTAETPFGDSNTG) shows a compositional bias: polar residues. The chain crosses the membrane as a helical span at residues 1481–1501 (ALYLAGLAGAGLAALGVWAWL).

The protein in the N-terminal section; belongs to the glycosyltransferase 2 family. It in the C-terminal section; belongs to the AcsB/BcsB family.

It is found in the cell inner membrane. It catalyses the reaction [(1-&gt;4)-beta-D-glucosyl](n) + UDP-alpha-D-glucose = [(1-&gt;4)-beta-D-glucosyl](n+1) + UDP + H(+). Its pathway is glycan metabolism; bacterial cellulose biosynthesis. The chain is Putative cellulose synthase 3 (bcsABII-B) from Komagataeibacter xylinus (Gluconacetobacter xylinus).